Reading from the N-terminus, the 460-residue chain is NADH-ubiquinone oxidoreductase chain 4 (460 aa).

A run of 13 helical transmembrane segments spans residues 22-42 (WLWP…LLWF), 59-79 (IDPL…LMIL), 93-113 (QRIY…AFSA), 114-134 (TELI…LIII), 148-168 (TYFL…LLLM), 195-215 (FWWT…GVHL), 225-245 (PIAG…YGMM), 258-278 (MAYP…SICL), 286-306 (LIAY…MIQT), 310-330 (FAGA…LFCL), 351-371 (VMLP…LALP), 394-414 (ILLT…MFLM), and 440-460 (LHLI…GWTF).

This sequence belongs to the complex I subunit 4 family.

Its subcellular location is the mitochondrion membrane. It carries out the reaction a ubiquinone + NADH + 5 H(+)(in) = a ubiquinol + NAD(+) + 4 H(+)(out). Core subunit of the mitochondrial membrane respiratory chain NADH dehydrogenase (Complex I) that is believed to belong to the minimal assembly required for catalysis. Complex I functions in the transfer of electrons from NADH to the respiratory chain. The immediate electron acceptor for the enzyme is believed to be ubiquinone. The chain is NADH-ubiquinone oxidoreductase chain 4 (MT-ND4) from Squalus acanthias (Spiny dogfish).